The sequence spans 373 residues: Flagellar P-ring protein (373 aa).

Positions Met-1–Ala-26 are cleaved as a signal peptide.

Belongs to the FlgI family. The basal body constitutes a major portion of the flagellar organelle and consists of four rings (L,P,S, and M) mounted on a central rod.

It localises to the periplasm. The protein localises to the bacterial flagellum basal body. Its function is as follows. Assembles around the rod to form the L-ring and probably protects the motor/basal body from shearing forces during rotation. This Rhizobium etli (strain ATCC 51251 / DSM 11541 / JCM 21823 / NBRC 15573 / CFN 42) protein is Flagellar P-ring protein.